A 296-amino-acid chain; its full sequence is Acetylglutamate kinase (296 aa).

Substrate contacts are provided by residues 67–68 (GG), Arg89, and Asn194.

The protein belongs to the acetylglutamate kinase family. ArgB subfamily.

Its subcellular location is the cytoplasm. It carries out the reaction N-acetyl-L-glutamate + ATP = N-acetyl-L-glutamyl 5-phosphate + ADP. Its pathway is amino-acid biosynthesis; L-arginine biosynthesis; N(2)-acetyl-L-ornithine from L-glutamate: step 2/4. Functionally, catalyzes the ATP-dependent phosphorylation of N-acetyl-L-glutamate. The polypeptide is Acetylglutamate kinase (Brucella abortus (strain S19)).